The chain runs to 201 residues: Holliday junction branch migration complex subunit RuvA (201 aa).

Positions 1–63 (MYAYIKGKLS…EDAQLLYGFM (63 aa)) are domain I. The segment at 64–142 (SEEEKGMFLS…ITEENPETLL (79 aa)) is domain II. The flexible linker stretch occupies residues 143 to 153 (NFEGSESNQTS). Residues 153 to 201 (SPILDEALLALEALGYSKRELNKVEKKLQAESYTSVDEAVKAGLKILVS) are domain III.

Belongs to the RuvA family. As to quaternary structure, homotetramer. Forms an RuvA(8)-RuvB(12)-Holliday junction (HJ) complex. HJ DNA is sandwiched between 2 RuvA tetramers; dsDNA enters through RuvA and exits via RuvB. An RuvB hexamer assembles on each DNA strand where it exits the tetramer. Each RuvB hexamer is contacted by two RuvA subunits (via domain III) on 2 adjacent RuvB subunits; this complex drives branch migration. In the full resolvosome a probable DNA-RuvA(4)-RuvB(12)-RuvC(2) complex forms which resolves the HJ.

Its subcellular location is the cytoplasm. Its function is as follows. The RuvA-RuvB-RuvC complex processes Holliday junction (HJ) DNA during genetic recombination and DNA repair, while the RuvA-RuvB complex plays an important role in the rescue of blocked DNA replication forks via replication fork reversal (RFR). RuvA specifically binds to HJ cruciform DNA, conferring on it an open structure. The RuvB hexamer acts as an ATP-dependent pump, pulling dsDNA into and through the RuvAB complex. HJ branch migration allows RuvC to scan DNA until it finds its consensus sequence, where it cleaves and resolves the cruciform DNA. This Staphylococcus carnosus (strain TM300) protein is Holliday junction branch migration complex subunit RuvA.